Reading from the N-terminus, the 492-residue chain is N-succinylglutamate 5-semialdehyde dehydrogenase (492 aa).

220-225 lines the NAD(+) pocket; the sequence is GSANTG. Catalysis depends on residues Glu243 and Cys277.

The protein belongs to the aldehyde dehydrogenase family. AstD subfamily.

It catalyses the reaction N-succinyl-L-glutamate 5-semialdehyde + NAD(+) + H2O = N-succinyl-L-glutamate + NADH + 2 H(+). It functions in the pathway amino-acid degradation; L-arginine degradation via AST pathway; L-glutamate and succinate from L-arginine: step 4/5. Catalyzes the NAD-dependent reduction of succinylglutamate semialdehyde into succinylglutamate. The polypeptide is N-succinylglutamate 5-semialdehyde dehydrogenase (Escherichia coli O139:H28 (strain E24377A / ETEC)).